Here is a 629-residue protein sequence, read N- to C-terminus: Natural resistance-associated macrophage protein 2 homolog (629 aa).

The Cytoplasmic segment spans residues M1–K151. Residues N50–I119 are disordered. The segment covering Q62–Q85 has biased composition (low complexity). Residues D96–N105 are compositionally biased toward basic and acidic residues. Residues I106–S118 are compositionally biased toward low complexity. Residues S152 to T172 traverse the membrane as a helical segment. Residues D173–Y182 lie on the Extracellular side of the membrane. The helical transmembrane segment at Q183 to I203 threads the bilayer. The Cytoplasmic portion of the chain corresponds to K204 to T224. The chain crosses the membrane as a helical span at residues V225 to V245. Residues I246–N253 lie on the Extracellular side of the membrane. A helical transmembrane segment spans residues I254 to F274. At L275–E286 the chain is on the cytoplasmic side. A helical transmembrane segment spans residues L287–S307. The Extracellular portion of the chain corresponds to K308–S326. The chain crosses the membrane as a helical span at residues V327–G347. Residues S348–V376 lie on the Cytoplasmic side of the membrane. A helical membrane pass occupies residues L377–F397. Topologically, residues W398 to K421 are extracellular. A helical transmembrane segment spans residues L422–G442. Residues T443–R468 lie on the Cytoplasmic side of the membrane. Residues L469–T489 form a helical membrane-spanning segment. At L490–L491 the chain is on the extracellular side. Residues I492–F512 form a helical membrane-spanning segment. Residues T513–S527 are Cytoplasmic-facing. Residues I528–F548 traverse the membrane as a helical segment. At Q549–L565 the chain is on the extracellular side. The N-linked (GlcNAc...) asparagine glycan is linked to N557. A helical membrane pass occupies residues T566–I586. Over S587 to Q629 the chain is Cytoplasmic.

This sequence belongs to the NRAMP family.

The protein localises to the cell membrane. Functionally, divalent transition metal (iron and manganese) transporter. In Dictyostelium discoideum (Social amoeba), this protein is Natural resistance-associated macrophage protein 2 homolog (nramp2).